The chain runs to 239 residues: tRNA (guanine-N(1)-)-methyltransferase (239 aa).

S-adenosyl-L-methionine-binding positions include Gly-108 and 127 to 132; that span reads LGDYVL.

It belongs to the RNA methyltransferase TrmD family. In terms of assembly, homodimer.

Its subcellular location is the cytoplasm. It catalyses the reaction guanosine(37) in tRNA + S-adenosyl-L-methionine = N(1)-methylguanosine(37) in tRNA + S-adenosyl-L-homocysteine + H(+). In terms of biological role, specifically methylates guanosine-37 in various tRNAs. The chain is tRNA (guanine-N(1)-)-methyltransferase from Streptococcus pneumoniae (strain P1031).